The sequence spans 215 residues: MOB kinase activator-like 1B (215 aa).

Residues 1–29 (MSLFGLGSRNQKTFRPKKSAPTGSKGAQL) are disordered. Residues Cys-80, Cys-85, His-162, and His-167 each coordinate Zn(2+).

This sequence belongs to the MOB1/phocein family. In terms of tissue distribution, constitutively expressed with higher expression in roots, flowers and pods than in leaves and stems.

The protein localises to the cytoplasm. It localises to the cytoskeleton. Its subcellular location is the phragmoplast. This is MOB kinase activator-like 1B from Medicago sativa subsp. falcata (Sickle medic).